A 259-amino-acid polypeptide reads, in one-letter code: Pimeloyl-[acyl-carrier protein] methyl ester esterase (259 aa).

Substrate contacts are provided by residues W18, 78 to 79, and 139 to 143; these read SL and FLALD. The Nucleophile role is filled by S78. Catalysis depends on residues D203 and H231. Residue H231 coordinates substrate.

This sequence belongs to the AB hydrolase superfamily. Carboxylesterase BioH family. As to quaternary structure, monomer.

It is found in the cytoplasm. It catalyses the reaction 6-carboxyhexanoyl-[ACP] methyl ester + H2O = 6-carboxyhexanoyl-[ACP] + methanol + H(+). It functions in the pathway cofactor biosynthesis; biotin biosynthesis. In terms of biological role, the physiological role of BioH is to remove the methyl group introduced by BioC when the pimeloyl moiety is complete. It allows to synthesize pimeloyl-ACP via the fatty acid synthetic pathway through the hydrolysis of the ester bonds of pimeloyl-ACP esters. This Stenotrophomonas maltophilia (strain K279a) protein is Pimeloyl-[acyl-carrier protein] methyl ester esterase.